Consider the following 59-residue polypeptide: Single-pass membrane and coiled-coil domain-containing protein 4 (59 aa).

The tract at residues 1–27 (MRQLKGKPKKETSRDKKERKQAMQEAR) is disordered. Basic and acidic residues predominate over residues 9–27 (KKETSRDKKERKQAMQEAR). Residues 9–31 (KKETSRDKKERKQAMQEARRQIT) are a coiled coil. The chain crosses the membrane as a helical span at residues 32-52 (TVVLPTLAVVVLLIVVFVYVA).

It belongs to the SMCO4 family.

The protein localises to the membrane. The sequence is that of Single-pass membrane and coiled-coil domain-containing protein 4 (SMCO4) from Bos taurus (Bovine).